The sequence spans 393 residues: Branched-chain-amino-acid aminotransferase, mitochondrial (393 aa).

The N-terminal 16 residues, 1–16 (MLQRHSLKLGKFSIRT), are a transit peptide targeting the mitochondrion. Lysine 219 carries the post-translational modification N6-(pyridoxal phosphate)lysine. Threonine 315 carries the post-translational modification Phosphothreonine.

Belongs to the class-IV pyridoxal-phosphate-dependent aminotransferase family. It depends on pyridoxal 5'-phosphate as a cofactor.

The protein resides in the mitochondrion matrix. It catalyses the reaction L-leucine + 2-oxoglutarate = 4-methyl-2-oxopentanoate + L-glutamate. It carries out the reaction L-isoleucine + 2-oxoglutarate = (S)-3-methyl-2-oxopentanoate + L-glutamate. The catalysed reaction is L-valine + 2-oxoglutarate = 3-methyl-2-oxobutanoate + L-glutamate. The enzyme catalyses a 2-oxocarboxylate + L-methionine = 4-methylsulfanyl-2-oxobutanoate + an L-alpha-amino acid. Its pathway is amino-acid biosynthesis; L-isoleucine biosynthesis; L-isoleucine from 2-oxobutanoate: step 4/4. The protein operates within amino-acid biosynthesis; L-leucine biosynthesis; L-leucine from 3-methyl-2-oxobutanoate: step 4/4. It functions in the pathway amino-acid biosynthesis; L-valine biosynthesis; L-valine from pyruvate: step 4/4. It participates in amino-acid biosynthesis; L-methionine biosynthesis via salvage pathway; L-methionine from S-methyl-5-thio-alpha-D-ribose 1-phosphate: step 6/6. Mitochondrial isozyme of branched-chain-amino-acid aminotransferase, involved in the biosynthesis of the branched chain amino acids (BCAAs) leucine, isoleucine, and valine. Catalyzes the formation of methionine from 2-keto-4-methylthiobutyrate (KMTB) in the methionine salvage pathway primarily using BCAAs (leucine, isoleucine, and valine) as the amino donors. Appears to be involved in the regulation of the cell cycle, although this may be indirect via metabolic changes. Connects BCAAs and TCA-cycle metabolism governing TCA-cycle flux to activate TORC1 signaling. High copy suppressor of a temperature-sensitive mutation in the ABC transporter, ATM1. This is Branched-chain-amino-acid aminotransferase, mitochondrial from Saccharomyces cerevisiae (strain ATCC 204508 / S288c) (Baker's yeast).